Consider the following 828-residue polypeptide: Conserved oligomeric Golgi complex subunit 3 (828 aa).

Position 2 is an N-acetylalanine (alanine 2). A disordered region spans residues 504–543; the sequence is DEQKKVPSEASFSDVHLEEGESNSLTKSGSTESLNPRPQT. The segment covering 525-543 has biased composition (polar residues); that stretch reads SNSLTKSGSTESLNPRPQT. A Phosphoserine modification is found at serine 663.

Belongs to the COG3 family. Component of the conserved oligomeric Golgi complex which is composed of eight different subunits and is required for normal Golgi morphology and localization. Interacts with TMEM115. Widely expressed with highest levels in pancreas and testis and lowest levels in lung.

It localises to the golgi apparatus. The protein localises to the golgi stack membrane. In terms of biological role, involved in ER-Golgi transport. Also involved in retrograde (Golgi to ER) transport. This Homo sapiens (Human) protein is Conserved oligomeric Golgi complex subunit 3 (COG3).